The primary structure comprises 280 residues: Equatorin (280 aa).

Positions 1 to 19 are cleaved as a signal peptide; it reads MDFILLIFLSGVFLPNIFS. Residues 20–183 are Vesicular-facing; it reads LQPTVEQDPG…LSELEEIKLK (164 aa). Positions 112-131 are disordered; it reads ATASGEEDKRSEPSRKSSTP. A compositionally biased stretch (basic and acidic residues) spans 117 to 126; the sequence is EEDKRSEPSR. N145 carries N-linked (GlcNAc...) asparagine glycosylation. The chain crosses the membrane as a helical span at residues 184-204; it reads LMLGISLMTLILLIPLLIFCF. At 205 to 280 the chain is on the cytoplasmic side; that stretch reads ATLYKLRHLR…AEVTEERISE (76 aa). S279 carries the post-translational modification Phosphoserine.

In terms of assembly, interacts with SNAP25. In terms of processing, highly N- and O-glycosylated; contains sialic acid. Highly expressed in testis and epididymis. Low expression in other tissues.

It localises to the cytoplasmic vesicle. It is found in the secretory vesicle. The protein resides in the acrosome membrane. The protein localises to the acrosome inner membrane. Its subcellular location is the acrosome outer membrane. Its function is as follows. Acrosomal membrane-anchored protein involved in the process of fertilization and in acrosome biogenesis. The sequence is that of Equatorin (Eqtn) from Rattus norvegicus (Rat).